A 429-amino-acid chain; its full sequence is Enolase (429 aa).

(2R)-2-phosphoglycerate is bound at residue glutamine 164. The active-site Proton donor is the glutamate 206. 3 residues coordinate Mg(2+): aspartate 243, glutamate 286, and aspartate 313. (2R)-2-phosphoglycerate-binding residues include lysine 338, arginine 367, serine 368, and lysine 389. Lysine 338 acts as the Proton acceptor in catalysis.

The protein belongs to the enolase family. Requires Mg(2+) as cofactor.

The protein localises to the cytoplasm. Its subcellular location is the secreted. It localises to the cell surface. The enzyme catalyses (2R)-2-phosphoglycerate = phosphoenolpyruvate + H2O. It participates in carbohydrate degradation; glycolysis; pyruvate from D-glyceraldehyde 3-phosphate: step 4/5. Its function is as follows. Catalyzes the reversible conversion of 2-phosphoglycerate (2-PG) into phosphoenolpyruvate (PEP). It is essential for the degradation of carbohydrates via glycolysis. This chain is Enolase, found in Thermosipho africanus (strain TCF52B).